We begin with the raw amino-acid sequence, 192 residues long: uncharacterized protein (192 aa).

The N-terminal stretch at 1–24 (MSGVLSCVLRACACAGLCCWVCMG) is a signal peptide. The disordered stretch occupies residues 140–192 (RAGADEGAGGNAAGCPEDTRGFARSPGDLMGGMNGDLGDEGETGEGGDNGAGE).

This is an uncharacterized protein from Human herpesvirus 6A (strain Uganda-1102) (HHV-6 variant A).